A 266-amino-acid chain; its full sequence is F-actin-capping protein subunit beta (266 aa).

The protein belongs to the F-actin-capping protein beta subunit family. In terms of assembly, component of the F-actin capping complex, composed of a heterodimer of an alpha and a beta subunit.

The protein resides in the cytoplasm. The protein localises to the cytoskeleton. It is found in the actin patch. Its function is as follows. F-actin-capping proteins bind in a Ca(2+)-independent manner to the fast growing ends of actin filaments (barbed end) thereby blocking the exchange of subunits at these ends. Unlike other capping proteins (such as gelsolin and severin), these proteins do not sever actin filaments. This chain is F-actin-capping protein subunit beta (cap2), found in Emericella nidulans (strain FGSC A4 / ATCC 38163 / CBS 112.46 / NRRL 194 / M139) (Aspergillus nidulans).